The sequence spans 277 residues: MALKHFNPITPGQRQLVIVDRSELYKGKPVKSLTEGLSKKGGRNNTGRITVRFQGGGHKRSYRFIDFKRRKLDVVGTVERLEYDPNRTAFIALIRYTDGELAYILAPQRLAVGDQVVAGNSVDVKPGNAMPLSSMPVGTIIHNVELKPGKGGQIARSAGTYAQLVGRDQGMAILRLNSGEQRLVSGACFASVGAVSNPDHGNINDGKAGRSVWRGKRPHVRGVAMNPVDHPHGGGEGRTSGGRHPVTPWGKPTKGKKTRSNKATDKFIMRSRHQRKK.

The tract at residues 222 to 277 (GVAMNPVDHPHGGGEGRTSGGRHPVTPWGKPTKGKKTRSNKATDKFIMRSRHQRKK) is disordered.

It belongs to the universal ribosomal protein uL2 family. Part of the 50S ribosomal subunit. Forms a bridge to the 30S subunit in the 70S ribosome.

Functionally, one of the primary rRNA binding proteins. Required for association of the 30S and 50S subunits to form the 70S ribosome, for tRNA binding and peptide bond formation. It has been suggested to have peptidyltransferase activity; this is somewhat controversial. Makes several contacts with the 16S rRNA in the 70S ribosome. The polypeptide is Large ribosomal subunit protein uL2 (Brucella abortus (strain S19)).